The following is a 675-amino-acid chain: Potassium-transporting ATPase ATP-binding subunit (675 aa).

The next 4 helical transmembrane spans lie at 34–54 (IMFV…FPDI), 65–85 (LITI…SEAF), 216–236 (IALF…IVTL), and 245–265 (LILP…TTIG). Asp304 acts as the 4-aspartylphosphate intermediate in catalysis. Residues Asp341, Glu345, 372–379 (FTAETRMS), and Lys390 contribute to the ATP site. Positions 513 and 517 each coordinate Mg(2+). The next 3 helical transmembrane spans lie at 569-591 (ALTT…ALMM), 611-631 (AIIS…PIAM), and 644-664 (IFIN…FLGI).

Belongs to the cation transport ATPase (P-type) (TC 3.A.3) family. Type IA subfamily. In terms of assembly, the system is composed of three essential subunits: KdpA, KdpB and KdpC.

Its subcellular location is the cell membrane. It catalyses the reaction K(+)(out) + ATP + H2O = K(+)(in) + ADP + phosphate + H(+). Its function is as follows. Part of the high-affinity ATP-driven potassium transport (or Kdp) system, which catalyzes the hydrolysis of ATP coupled with the electrogenic transport of potassium into the cytoplasm. This subunit is responsible for energy coupling to the transport system and for the release of the potassium ions to the cytoplasm. The sequence is that of Potassium-transporting ATPase ATP-binding subunit from Staphylococcus aureus (strain MSSA476).